A 157-amino-acid chain; its full sequence is CAPA peptides (157 aa).

An N-terminal signal peptide occupies residues 1–21 (MQPTMRIIVSMALLAYAVASA). A propeptide spanning residues 22–28 (YHSNVKL) is cleaved from the precursor. Position 42 is a valine amide (V42). The propeptide occupies 45–66 (ASGNTWQLPLNDLYPEYEPAQV). Pyrrolidone carboxylic acid; partial is present on Q69. V76 is subject to Valine amide. L85 and L117 each carry leucine amide. The propeptide occupies 120–157 (AFKNDDDEITIQNESNDHSEPEQTELIHEDRRKRQTLN). Residues 131–157 (QNESNDHSEPEQTELIHEDRRKRQTLN) form a disordered region. Positions 134–151 (SNDHSEPEQTELIHEDRR) are enriched in basic and acidic residues.

It belongs to the pyrokinin family. As to expression, CAPA-periviscerokinin 1: Expressed in corpora cardiaca (CC), corpora allata (CA), antennal lobe (AL) and gnathal ganglion (GNG) (at protein level). Expression detected in most animals in CC and CA and in some animals in AL and GNG (at protein level). CAPA-periviscerokinin 2: Expressed in corpora cardiaca (CC), corpora allata (CA), antennal lobe (AL) and gnathal ganglion (GNG) (at protein level). For non-pyroglutamate form, expression in AL detected in all animals, in CC, CA and GNG in most animals (at protein level). For pyroglutamate form, expression in CC and CA detected in most animals, in AL and GNG in some animals (at protein level). CAPA-periviscerokinin 3: Expressed in corpora cardiaca (CC), corpora allata (CA), antennal lobe (AL) and gnathal ganglion (GNG). Expression detected in most animals in CC and CA and in some animals in AL and GNG (at protein level). CAPA-precursor-related peptide 3: Expressed in corpora cardiaca (CC), corpora allata (CA), antennal lobe (AL) and gnathal ganglion (GNG) (at protein level). Expression in CC and CA detected in some animals, expression in Al and GNG detected in few animals (at protein level). CAPA-trypto-pyrokinin: Expressed in corpora cardiaca (CC), corpora allata (CA), antennal lobe (AL) and gnathal ganglion (GNG) (at protein level). Expression in CC, CA and GNG detected in most animals, in AL in some animals (at protein level).

It localises to the secreted. Functionally, myoactive. The chain is CAPA peptides from Agrotis ipsilon (Black cutworm moth).